Here is a 439-residue protein sequence, read N- to C-terminus: GTPase Der (439 aa).

EngA-type G domains follow at residues 4 to 168 and 177 to 352; these read PIVA…KDDE and INIA…DNYT. GTP is bound by residues 10–17, 57–61, 120–123, 183–190, 230–234, and 295–298; these read GRPNVGKS, DTGGI, NKID, GKPNVGKS, DTAGL, and NKWD. Positions 353 to 437 constitute a KH-like domain; it reads KRVKTGVLND…GIKLEFRERK (85 aa).

It belongs to the TRAFAC class TrmE-Era-EngA-EngB-Septin-like GTPase superfamily. EngA (Der) GTPase family. Associates with the 50S ribosomal subunit.

In terms of biological role, GTPase that plays an essential role in the late steps of ribosome biogenesis. This is GTPase Der from Clostridium botulinum (strain Okra / Type B1).